We begin with the raw amino-acid sequence, 421 residues long: Nucleoprotein (421 aa).

A compositionally biased stretch (polar residues) spans 1-11; it reads MSDNGPQSQRS. Disordered stretches follow at residues 1 to 50 and 63 to 82; these read MSDN…NNTA and ELRFPRGQGVPINTNSGKDD. The RNA-binding stretch occupies residues 41 to 186; sequence RPQGLPNNTA…RGGSQSSSRS (146 aa). A CoV N NTD domain is found at 48–175; the sequence is NTASWFTALT…TLPKGFYAEG (128 aa). RNA contacts are provided by Arg92, Arg107, and Arg149. Disordered regions lie at residues 168 to 212, 233 to 271, and 361 to 421; these read PKGF…RLAS, KVSGKGQQQPGQTVTKKSAAEASKKPRQKRTATKQYNVT, and KTFP…STQA. Residue Ser176 is modified to Phosphoserine; by host. Residues 179–212 are compositionally biased toward low complexity; it reads GSQSSSRSSSRSRGNSRNSTPGSSRGSSPARLAS. Residues 237–248 show a composition bias toward polar residues; the sequence is KGQQQPGQTVTK. Residues 247 to 364 form the CoV N CTD domain; the sequence is TKKSAAEASK…KHIDAYKTFP (118 aa). The dimerization stretch occupies residues 258 to 361; it reads PRQKRTATKQ…LLNKHIDAYK (104 aa). Positions 367–378 are enriched in basic and acidic residues; it reads EPKKDKKKKTDE. The span at 405–421 shows a compositional bias: polar residues; the sequence is RQLQHSMSGASADSTQA.

This sequence belongs to the betacoronavirus nucleocapsid protein family. As to quaternary structure, homooligomer. Both monomeric and oligomeric forms interact with RNA. Interacts with protein M. Interacts with NSP3; this interaction serves to tether the genome to the newly translated replicase-transcriptase complex at a very early stage of infection. Post-translationally, ADP-ribosylated. The ADP-ribosylation is retained in the virion during infection. In terms of processing, phosphorylated on serine and threonine residues.

The protein resides in the virion. Its subcellular location is the host endoplasmic reticulum-Golgi intermediate compartment. It is found in the host Golgi apparatus. Packages the positive strand viral genome RNA into a helical ribonucleocapsid (RNP) and plays a fundamental role during virion assembly through its interactions with the viral genome and membrane protein M. Plays an important role in enhancing the efficiency of subgenomic viral RNA transcription as well as viral replication. The chain is Nucleoprotein from Rhinolophus sinicus (Chinese rufous horseshoe bat).